The following is a 118-amino-acid chain: Small ribosomal subunit protein uS13 (118 aa).

The disordered stretch occupies residues 94 to 118 (SLPLRGQRTKTNARTRKGPRKPIKK).

It belongs to the universal ribosomal protein uS13 family. Part of the 30S ribosomal subunit. Forms a loose heterodimer with protein S19. Forms two bridges to the 50S subunit in the 70S ribosome.

In terms of biological role, located at the top of the head of the 30S subunit, it contacts several helices of the 16S rRNA. In the 70S ribosome it contacts the 23S rRNA (bridge B1a) and protein L5 of the 50S subunit (bridge B1b), connecting the 2 subunits; these bridges are implicated in subunit movement. Contacts the tRNAs in the A and P-sites. The sequence is that of Small ribosomal subunit protein uS13 from Colwellia psychrerythraea (strain 34H / ATCC BAA-681) (Vibrio psychroerythus).